The following is a 100-amino-acid chain: Urease subunit gamma (100 aa).

This sequence belongs to the urease gamma subunit family. Heterotrimer of UreA (gamma), UreB (beta) and UreC (alpha) subunits. Three heterotrimers associate to form the active enzyme.

It localises to the cytoplasm. The enzyme catalyses urea + 2 H2O + H(+) = hydrogencarbonate + 2 NH4(+). It functions in the pathway nitrogen metabolism; urea degradation; CO(2) and NH(3) from urea (urease route): step 1/1. In Synechococcus sp. (strain CC9902), this protein is Urease subunit gamma.